A 60-amino-acid polypeptide reads, in one-letter code: Protein P7 (60 aa).

Residues 28 to 48 form a helical membrane-spanning segment; the sequence is FIGVTLIGMFISYYLYALISI.

The protein resides in the host membrane. This Vitis vinifera (Grape) protein is Protein P7.